The sequence spans 463 residues: Nitrogenase vanadium-iron protein beta chain (463 aa).

[8Fe-7S] cluster is bound by residues C20, C45, C104, and S142.

This sequence belongs to the NifD/NifK/NifE/NifN family. Hexamer of two alpha, two beta, and two delta chains. Requires [8Fe-7S] cluster as cofactor.

The enzyme catalyses N2 + 8 reduced [2Fe-2S]-[ferredoxin] + 16 ATP + 16 H2O = H2 + 8 oxidized [2Fe-2S]-[ferredoxin] + 2 NH4(+) + 16 ADP + 16 phosphate + 6 H(+). Its function is as follows. This vanadium-iron protein is part of the nitrogenase complex that catalyzes the key enzymatic reactions in nitrogen fixation. The protein is Nitrogenase vanadium-iron protein beta chain (vnfK) of Trichormus variabilis (strain ATCC 29413 / PCC 7937) (Anabaena variabilis).